Consider the following 256-residue polypeptide: Pre-mRNA-splicing factor CWC24 (256 aa).

Positions 1-80 (MFKRKKNAGQ…SRNLSKTDEA (80 aa)) are disordered. Low complexity predominate over residues 18–34 (SDSSSEGSGDESALSSA). The span at 45 to 66 (RTTPTSVATSTKVRAPSFSSTI) shows a compositional bias: polar residues. Basic and acidic residues predominate over residues 67 to 80 (DHSHSRNLSKTDEA). The C3H1-type zinc finger occupies 131–159 (DYQPDVCKDYKLTGFCGYGDSCKFLHMRE). Positions 173 to 182 (IKNREDDPPR) are enriched in basic and acidic residues. Positions 173 to 200 (IKNREDDPPRDAGGVSRDADTATSRADS) are disordered. An RING-type zinc finger spans residues 206 to 244 (CPICQGEFKSPVVTQCCHYFCEKCFLAKHKKKQNCFVCG).

This sequence belongs to the CWC24 family. Associated with the spliceosome.

The protein resides in the nucleus. Its function is as follows. Involved in pre-mRNA splicing. This is Pre-mRNA-splicing factor CWC24 (CWC24) from Yarrowia lipolytica (strain CLIB 122 / E 150) (Yeast).